An 82-amino-acid chain; its full sequence is RNA-binding protein Hfq (82 aa).

The Sm domain maps to 10 to 70; it reads DIFLNGARKN…LSTITPSKAI (61 aa).

The protein belongs to the Hfq family. Homohexamer.

Functionally, RNA chaperone that binds small regulatory RNA (sRNAs) and mRNAs to facilitate mRNA translational regulation in response to envelope stress, environmental stress and changes in metabolite concentrations. Also binds with high specificity to tRNAs. In Clostridium kluyveri (strain NBRC 12016), this protein is RNA-binding protein Hfq.